We begin with the raw amino-acid sequence, 475 residues long: UDP-glycosyltransferase 1 (475 aa).

His15 serves as the catalytic Proton acceptor. His15 contacts an anthocyanidin. Asp117 (charge relay) is an active-site residue. 7 residues coordinate UDP-alpha-D-glucose: Ala345, Gln347, His362, Trp365, Asn366, Ser367, and Glu370. An an anthocyanidin-binding site is contributed by Gly385. Residues Glu386 and Gln387 each coordinate UDP-alpha-D-glucose.

This sequence belongs to the UDP-glycosyltransferase family. As to expression, mostly expressed in leaves and flowers, and, to a lower extent, in roots and stems.

The catalysed reaction is (20S)-protopanaxadiol + UDP-alpha-D-glucose = (20S)-ginsenoside C-K + UDP + H(+). The enzyme catalyses (20S)-ginsenoside Rg3 + UDP-alpha-D-glucose = (20S)-ginsenoside Rd + UDP + H(+). It catalyses the reaction (20S)-ginsenoside Rh2 + UDP-alpha-D-glucose = (20S)-ginsenoside F2 + UDP + H(+). It carries out the reaction (20S)-protopanaxatriol + UDP-alpha-D-glucose = (20S)-ginsenoside F1 + UDP + H(+). The catalysed reaction is dammarenediol-II + UDP-alpha-D-glucose = (20S)-20-O-(beta-D-glucosyl)-3-hydroxydammarene + UDP + H(+). Its pathway is secondary metabolite biosynthesis; terpenoid biosynthesis. Its function is as follows. Component of the dammarane-type triterpene saponins (e.g. ginsenosides or panaxosides) biosynthetic pathway. Glycosyltransferase that catalyzes the biosynthesis of ginsenoside F1 from protopanaxatriol (PPT). Triggers C20-OH glycosylation of ginsenoside Rg3 to produce ginsenoside Rd. Mediates the conversion of protopanaxadiol (PPD) to the ginsenoside compound K. catalyzes the production of 20S-O-beta-(D-glucosyl)-dammarenediol II form dammarenediol II (DM). In Panax ginseng (Korean ginseng), this protein is UDP-glycosyltransferase 1.